The sequence spans 336 residues: F420-dependent glucose-6-phosphate dehydrogenase (336 aa).

Aspartate 39 is a coenzyme F420-(gamma-Glu)n binding site. The active-site Proton donor is the histidine 40. Coenzyme F420-(gamma-Glu)n-binding positions include threonine 76 and 107–108 (TG). The active-site Proton acceptor is the glutamate 109. Coenzyme F420-(gamma-Glu)n contacts are provided by residues asparagine 112, 177–178 (GG), and 180–181 (VV). Substrate-binding residues include threonine 195, lysine 198, lysine 259, and arginine 283.

The protein belongs to the F420-dependent glucose-6-phosphate dehydrogenase family. In terms of assembly, homodimer.

It carries out the reaction oxidized coenzyme F420-(gamma-L-Glu)(n) + D-glucose 6-phosphate + H(+) = 6-phospho-D-glucono-1,5-lactone + reduced coenzyme F420-(gamma-L-Glu)(n). Catalyzes the coenzyme F420-dependent oxidation of glucose 6-phosphate (G6P) to 6-phosphogluconolactone. Appears to have a role in resistance to oxidative stress, via its consumption of G6P that serves as a source of reducing power to combat oxidative stress in mycobacteria. Cannot use NAD, NADP, FAD or FMN instead of coenzyme F420 as an electron acceptor. Exhibits nearly no activity with D-mannose-6-phosphate or D-fructose-6-phosphate as substrate. This is F420-dependent glucose-6-phosphate dehydrogenase (fgd) from Mycolicibacterium smegmatis (strain ATCC 700084 / mc(2)155) (Mycobacterium smegmatis).